A 215-amino-acid polypeptide reads, in one-letter code: 3-demethoxyubiquinol 3-hydroxylase (215 aa).

Fe cation-binding residues include Glu64, Glu94, His97, Glu146, Glu178, and His181.

This sequence belongs to the COQ7 family. Fe cation serves as cofactor.

It is found in the cell membrane. It carries out the reaction a 5-methoxy-2-methyl-3-(all-trans-polyprenyl)benzene-1,4-diol + AH2 + O2 = a 3-demethylubiquinol + A + H2O. Its pathway is cofactor biosynthesis; ubiquinone biosynthesis. Catalyzes the hydroxylation of 2-nonaprenyl-3-methyl-6-methoxy-1,4-benzoquinol during ubiquinone biosynthesis. The chain is 3-demethoxyubiquinol 3-hydroxylase from Bordetella avium (strain 197N).